Consider the following 299-residue polypeptide: Probable lipid kinase YegS-like (299 aa).

The region spanning alanine 2–threonine 133 is the DAGKc domain. Residues threonine 40, glycine 66–glutamate 72, and threonine 95 contribute to the ATP site. Mg(2+) contacts are provided by leucine 215, aspartate 218, and leucine 220. The Proton acceptor role is filled by glutamate 271.

This sequence belongs to the diacylglycerol/lipid kinase family. YegS lipid kinase subfamily. It depends on Mg(2+) as a cofactor. Ca(2+) is required as a cofactor.

The protein resides in the cytoplasm. In terms of biological role, probably phosphorylates lipids; the in vivo substrate is unknown. The polypeptide is Probable lipid kinase YegS-like (Enterobacter sp. (strain 638)).